The sequence spans 266 residues: Gas vesicle protein L (266 aa).

Belongs to the gas vesicle GvpF/GvpL family.

The protein localises to the gas vesicle. Its function is as follows. Might be involved in nucleating gas vesicle formation. A minor component of the gas vesicle. Gas vesicles are hollow, gas filled proteinaceous nanostructures found in some microorganisms. It is not clear what function gas vesicles perform in soil bacteria. This chain is Gas vesicle protein L, found in Streptomyces sp. (strain CB03234).